We begin with the raw amino-acid sequence, 443 residues long: Probable ribonuclease FAU-1 (443 aa).

This sequence belongs to the FAU-1 family.

Its function is as follows. Probable RNase involved in rRNA stability through maturation and/or degradation of precursor rRNAs. Binds to RNA in loop regions with AU-rich sequences. The sequence is that of Probable ribonuclease FAU-1 from Pyrobaculum aerophilum (strain ATCC 51768 / DSM 7523 / JCM 9630 / CIP 104966 / NBRC 100827 / IM2).